A 252-amino-acid polypeptide reads, in one-letter code: Cell division protein ZapD (252 aa).

This sequence belongs to the ZapD family. As to quaternary structure, interacts with FtsZ.

It localises to the cytoplasm. In terms of biological role, cell division factor that enhances FtsZ-ring assembly. Directly interacts with FtsZ and promotes bundling of FtsZ protofilaments, with a reduction in FtsZ GTPase activity. This chain is Cell division protein ZapD, found in Dechloromonas aromatica (strain RCB).